The primary structure comprises 575 residues: Methionine--tRNA ligase, mitochondrial (575 aa).

The 'HIGH' region motif lies at 20–32 (PIFYPNAKPHLGH). The 'KMSKS' region motif lies at 341–345 (KMSKS). Residue Lys-344 coordinates ATP.

This sequence belongs to the class-I aminoacyl-tRNA synthetase family.

It localises to the mitochondrion matrix. It catalyses the reaction tRNA(Met) + L-methionine + ATP = L-methionyl-tRNA(Met) + AMP + diphosphate. Its function is as follows. Catalyzes the attachment of methionine to tRNA(Met) in the mitochondrion. In Saccharomyces cerevisiae (strain ATCC 204508 / S288c) (Baker's yeast), this protein is Methionine--tRNA ligase, mitochondrial (MSM1).